A 1792-amino-acid polypeptide reads, in one-letter code: Brefeldin A-inhibited guanine nucleotide-exchange protein 2 (1792 aa).

The residue at position 1 (methionine 1) is an N-acetylmethionine. Residues 2-224 are DCB; DCB:DCB domain and DCB:HUS domain interaction; sequence QESQTKSMFV…KPQSPVIQAT (223 aa). The tract at residues 207–294 is disordered; the sequence is ELEKPMQSKP…SRGTDSGAQE (88 aa). Residues serine 214, serine 218, and serine 227 each carry the phosphoserine modification. Residues 214-225 are compositionally biased toward polar residues; sequence SKPQSPVIQATA. The span at 233–243 shows a compositional bias: polar residues; that stretch reads LKQSQAQSKPT. Residue threonine 244 is modified to Phosphothreonine. Phosphoserine is present on residues serine 355 and serine 356. The tract at residues 515-535 is HUS; DCB:HUS domain interaction; sequence ADAQCVVDIYVNYDCDLNAAN. Serine 621 carries the post-translational modification Phosphoserine. Residue threonine 623 is modified to Phosphothreonine. A Phosphoserine modification is found at serine 624. Threonine 633 carries the phosphothreonine modification. An SEC7 domain is found at 661-792; it reads FNKKPKRGIQ…IIMLTTDLHS (132 aa). Phosphoserine is present on residues serine 707, serine 1518, serine 1520, serine 1521, serine 1532, serine 1535, serine 1541, and serine 1789.

In terms of assembly, homodimer. Interacts with ARFGEF1/BIG1; both proteins are probably part of the same or very similar macromolecular complexes. Interacts with PRKAR1A, PRKAR2A, PRKAR1B, PRKAR2B, PPP1CC, PDE3A, TNFRSF1A, MYCBP and EXOC7. Interacts with GABRB1, GABRB2 and GABRB3. Post-translationally, in vitro phosphorylated by PKA reducing its GEF activity and dephosphorylated by phosphatase PP1.

The protein resides in the cytoplasm. It is found in the membrane. It localises to the golgi apparatus. The protein localises to the perinuclear region. Its subcellular location is the trans-Golgi network. The protein resides in the endosome. It is found in the cytoskeleton. It localises to the microtubule organizing center. The protein localises to the centrosome. Its subcellular location is the cell projection. The protein resides in the dendrite. It is found in the cytoplasmic vesicle. It localises to the synapse. With respect to regulation, inhibited by brefeldin A. Its function is as follows. Promotes guanine-nucleotide exchange on ARF1 and ARF3 and to a lower extent on ARF5 and ARF6. Promotes the activation of ARF1/ARF5/ARF6 through replacement of GDP with GTP. Involved in the regulation of Golgi vesicular transport. Required for the integrity of the endosomal compartment. Involved in trafficking from the trans-Golgi network (TGN) to endosomes and is required for membrane association of the AP-1 complex and GGA1. Seems to be involved in recycling of the transferrin receptor from recycling endosomes to the plasma membrane. Probably is involved in the exit of GABA(A) receptors from the endoplasmic reticulum. Involved in constitutive release of tumor necrosis factor receptor 1 via exosome-like vesicles; the function seems to involve PKA and specifically PRKAR2B. Proposed to act as A kinase-anchoring protein (AKAP) and may mediate crosstalk between Arf and PKA pathways. In Mus musculus (Mouse), this protein is Brefeldin A-inhibited guanine nucleotide-exchange protein 2 (Arfgef2).